The chain runs to 159 residues: Transcription elongation factor GreA (159 aa).

The stretch at 14–76 (VKKLEEELEY…QLENMLRNAN (63 aa)) forms a coiled coil.

This sequence belongs to the GreA/GreB family.

In terms of biological role, necessary for efficient RNA polymerase transcription elongation past template-encoded arresting sites. The arresting sites in DNA have the property of trapping a certain fraction of elongating RNA polymerases that pass through, resulting in locked ternary complexes. Cleavage of the nascent transcript by cleavage factors such as GreA or GreB allows the resumption of elongation from the new 3'terminus. GreA releases sequences of 2 to 3 nucleotides. This chain is Transcription elongation factor GreA, found in Clostridium novyi (strain NT).